The sequence spans 554 residues: MELCTQTVAADHEVIITRRSGSHHPTLWGDHFLAYADLRGANEGEEKQNEDLKEEVRKMLVMAPSKSLEKLELINTIQCLGLGYHFQSEIDESLSYMYTHYEEYSIGDLHAIALCFRLLRQQGYYVSCDAFKKFTNDQGNFKEELVKDVEGMLSLYEAAQFRVHGEQILDEALNFTIAQLKQILPKLSNSQLAQQITNALKYPIKDGIVRVETRKYISFYQQNQNHNEVLLNFAKLDFNILQTLHKKELSDMTRWWKKMELVNTLPYARDRLVECYFWCLGTYFEPQYSVARKMLTKISFYISIIDDTYDIYGKLDELTLFTQAIERWNIDASEQLPLYMKIIYRDLLDVYDEIEKELANENKSFLVNYSINEMKKVVRGYFQEAKWYYGKKVPTMEQYMKNGISTSAYILLTTTSWLAMGNVATKDAFDWVATEPPIVVASCYIIRLLNDLVSHEEEQKRGNAASAVECYMNEYSVTKEEAHIKIRDIIENYWKDLNEEYFKVDMIIIPRVLLMCIINLTRVAEFIYKDEDAYTFSKNNLKDVISDILVDPII.

Mg(2+) is bound by residues Asp306, Asp310, and Glu458. Positions 306-310 (DDTYD) match the DDXXD motif motif.

It belongs to the terpene synthase family. Tpsa subfamily. Requires Mg(2+) as cofactor. Mn(2+) serves as cofactor. As to expression, mostly expressed in stem and trichomes, to a lower extent in leaves, flowers and roots and, at low levels, in fruits.

The catalysed reaction is (2Z,6Z)-farnesyl diphosphate = beta-bisabolene + diphosphate. It carries out the reaction (2E,6E)-farnesyl diphosphate = (+)-valencene + diphosphate. The enzyme catalyses (2E,6E)-farnesyl diphosphate = (E)-beta-farnesene + diphosphate. It catalyses the reaction (2E,6E)-farnesyl diphosphate = gamma-gurjunene + diphosphate. The catalysed reaction is (2Z,6Z)-farnesyl diphosphate = (E)-gamma-bisabolene + diphosphate. It carries out the reaction (2E)-geranyl diphosphate = limonene + diphosphate. The enzyme catalyses (2E)-geranyl diphosphate = beta-myrcene + diphosphate. It catalyses the reaction (2E)-geranyl diphosphate = (E)-beta-ocimene + diphosphate. The catalysed reaction is (2E)-geranyl diphosphate = terpinolene + diphosphate. It carries out the reaction (2E)-geranyl diphosphate = gamma-terpinene + diphosphate. The enzyme catalyses (2Z,6Z)-farnesyl diphosphate = (Z)-gamma-bisabolene + diphosphate. It catalyses the reaction (2E,6E)-farnesyl diphosphate = (1S,5S,6R)-alpha-bergamotene + diphosphate. The catalysed reaction is (2Z,6Z)-farnesyl diphosphate = (1S,5S,6S)-alpha-bergamotene + diphosphate. It participates in secondary metabolite biosynthesis; terpenoid biosynthesis. Sesquiterpene synthase involved in the biosynthesis of volatile compounds. Mediates the conversion of (2E,6E)-farnesyl diphosphate (FPP) into gamma-gurjunene, (E)-beta-farnesene and (+)-valencene, and of (2Z,6Z)-farnesyl diphosphate ((ZZ)-FPP) into (E)-alpha-bergamotene and (Z)-gamma-bisabolene as well as beta-bisabolene, (Z)-alpha-bergamotene and (E)-gamma-bisabolene to a lower extent. Can act with a low efficiency as a monoterpene synthase with geranyl diphosphate (GPP) as substrate, thus producing beta-myrcene, (E)-beta-ocimene, limonene, terpinolene, gamma-terpinene and (Z)-beta-ocimene. In Solanum lycopersicum (Tomato), this protein is Terpene synthase 17.